Here is a 351-residue protein sequence, read N- to C-terminus: Large ribosomal subunit protein uL3 (351 aa).

Disordered regions lie at residues 1–31 (MGHR…TPRT) and 246–271 (KGSR…GQLG).

The protein belongs to the universal ribosomal protein uL3 family. Part of the 50S ribosomal subunit. Forms a cluster with proteins L14 and L24e.

Its function is as follows. One of the primary rRNA binding proteins, it binds directly near the 3'-end of the 23S rRNA, where it nucleates assembly of the 50S subunit. This chain is Large ribosomal subunit protein uL3, found in Saccharolobus solfataricus (strain ATCC 35092 / DSM 1617 / JCM 11322 / P2) (Sulfolobus solfataricus).